A 342-amino-acid polypeptide reads, in one-letter code: S-adenosylmethionine:tRNA ribosyltransferase-isomerase (342 aa).

This sequence belongs to the QueA family. In terms of assembly, monomer.

The protein resides in the cytoplasm. The enzyme catalyses 7-aminomethyl-7-carbaguanosine(34) in tRNA + S-adenosyl-L-methionine = epoxyqueuosine(34) in tRNA + adenine + L-methionine + 2 H(+). It participates in tRNA modification; tRNA-queuosine biosynthesis. Functionally, transfers and isomerizes the ribose moiety from AdoMet to the 7-aminomethyl group of 7-deazaguanine (preQ1-tRNA) to give epoxyqueuosine (oQ-tRNA). The polypeptide is S-adenosylmethionine:tRNA ribosyltransferase-isomerase (Bacillus velezensis (strain DSM 23117 / BGSC 10A6 / LMG 26770 / FZB42) (Bacillus amyloliquefaciens subsp. plantarum)).